The following is a 1388-amino-acid chain: ESX-5 secretion system protein EccC5 (1388 aa).

A run of 2 helical transmembrane segments spans residues 38–58 (WLIVVGVVVVGLLGGMVAMVF) and 65–85 (FGGVGSIFPIFMMVGIMMMMF). FtsK domains follow at residues 477 to 679 (GELL…GAAQ), 855 to 1049 (QPPW…EDAK), and 1158 to 1351 (LQPV…DPDE). Residues 500–507 (GTTGSGKS), 873–880 (GAGGSGKT), and 1175–1182 (GRRECGRT) contribute to the ATP site.

In terms of assembly, part of the ESX-5 / type VII secretion system (T7SS), which is composed of cytosolic and membrane components. The ESX-5 membrane complex is composed of EccB5, EccC5, EccD5 and EccE5.

It is found in the cell inner membrane. Functionally, part of the ESX-5 specialized secretion system, which is responsible for the secretion of EsxN and a number of PE_PGRS and PPE proteins. This component is essential for ESX-5 complex stability and secretion. The protein is ESX-5 secretion system protein EccC5 of Mycobacterium marinum (strain ATCC BAA-535 / M).